A 268-amino-acid polypeptide reads, in one-letter code: Gene 65 protein (268 aa).

In Mycobacterium (Mycobacteriophage L5), this protein is Gene 65 protein (65).